A 411-amino-acid chain; its full sequence is Glutamyl-tRNA reductase (411 aa).

Substrate contacts are provided by residues 49 to 52 (TCNR), Ser-99, 104 to 106 (ENE), and Gln-110. The active-site Nucleophile is Cys-50. 179–184 (GAGEAG) contacts NADP(+).

It belongs to the glutamyl-tRNA reductase family. In terms of assembly, homodimer.

It catalyses the reaction (S)-4-amino-5-oxopentanoate + tRNA(Glu) + NADP(+) = L-glutamyl-tRNA(Glu) + NADPH + H(+). It participates in porphyrin-containing compound metabolism; protoporphyrin-IX biosynthesis; 5-aminolevulinate from L-glutamyl-tRNA(Glu): step 1/2. Functionally, catalyzes the NADPH-dependent reduction of glutamyl-tRNA(Glu) to glutamate 1-semialdehyde (GSA). The protein is Glutamyl-tRNA reductase of Hyperthermus butylicus (strain DSM 5456 / JCM 9403 / PLM1-5).